The following is a 134-amino-acid chain: Fatty acid-binding protein, muscle (134 aa).

(9Z)-octadecenoate-binding positions include Arg109 and 129-131 (RIY).

The protein belongs to the calycin superfamily. Fatty-acid binding protein (FABP) family. As to quaternary structure, monomer. As to expression, adult flight muscle.

The protein localises to the cytoplasm. Its function is as follows. Binds fatty acids in a 1:1 molar ratio. This is Fatty acid-binding protein, muscle from Schistocerca gregaria (Desert locust).